The following is a 573-amino-acid chain: 60 kDa heat shock protein, mitochondrial (573 aa).

A mitochondrion-targeting transit peptide spans 1–26 (MLRLPTVLRQMRPVSRALAPHLTRAY). The residue at position 31 (Lys-31) is an N6-succinyllysine. 2 positions are modified to phosphoserine: Ser-67 and Ser-70. ATP is bound at residue Lys-75. An N6-acetyllysine modification is found at Lys-75. The residue at position 82 (Lys-82) is an N6-acetyllysine; alternate. Lys-82 carries the N6-succinyllysine; alternate modification. Lys-87 bears the N6-acetyllysine mark. Tyr-90 carries the phosphotyrosine modification. Lys-91 carries the N6-acetyllysine modification. 111–115 (DGTTT) serves as a coordination point for ATP. Lys-125 is subject to N6-acetyllysine; alternate. Lys-125 is modified (N6-succinyllysine; alternate). Lys-130 is modified (N6-acetyllysine). Lys-133 is subject to N6-acetyllysine; alternate. Lys-133 carries the N6-succinyllysine; alternate modification. Lys-133 is modified (N6-malonyllysine; alternate). Lys-156 is subject to N6-acetyllysine. An N6-acetyllysine; alternate mark is found at Lys-191, Lys-202, Lys-205, Lys-218, and Lys-236. Residues Lys-191, Lys-202, Lys-205, Lys-218, and Lys-236 each carry the N6-succinyllysine; alternate modification. Lys-249 is subject to N6-acetyllysine. N6-acetyllysine; alternate is present on Lys-250. Position 250 is an N6-succinyllysine; alternate (Lys-250). An N6-acetyllysine mark is found at Lys-269 and Lys-292. Lys-301 bears the N6-succinyllysine mark. At Lys-314 the chain carries N6-acetyllysine. Lys-352 is modified (N6-acetyllysine; alternate). Residue Lys-352 is modified to N6-succinyllysine; alternate. Lys-359 and Lys-389 each carry N6-acetyllysine. An N6-acetyllysine; alternate modification is found at Lys-396. Position 396 is an N6-succinyllysine; alternate (Lys-396). Ser-410 bears the Phosphoserine mark. Residue Gly-440 coordinates ATP. Residue Lys-455 is modified to N6-acetyllysine; alternate. At Lys-455 the chain carries N6-succinyllysine; alternate. N6-acetyllysine is present on Lys-469. Lys-481 is modified (N6-acetyllysine; alternate). Lys-481 is modified (N6-succinyllysine; alternate). Residue Ser-488 is modified to Phosphoserine. Asp-520 provides a ligand contact to ATP. A Glycyl lysine isopeptide (Lys-Gly) (interchain with G-Cter in SUMO2) cross-link involves residue Lys-551.

This sequence belongs to the chaperonin (HSP60) family. As to quaternary structure, homoheptamer arranged in a ring structure. The functional units of these chaperonins consist of heptameric rings of the large subunit Hsp60, which function as a back-to-back double ring. Interacts with 2 heptameric Hsp10 rings to form the symmetrical football complex. Interacts with HRAS. Interacts with ATAD3A. Interacts with ETFBKMT and EEF1AKMT3. Interacts with MFHAS1.

It is found in the mitochondrion matrix. It carries out the reaction ATP + H2O + a folded polypeptide = ADP + phosphate + an unfolded polypeptide.. Functionally, chaperonin implicated in mitochondrial protein import and macromolecular assembly. Together with Hsp10, facilitates the correct folding of imported proteins. May also prevent misfolding and promote the refolding and proper assembly of unfolded polypeptides generated under stress conditions in the mitochondrial matrix. The functional units of these chaperonins consist of heptameric rings of the large subunit Hsp60, which function as a back-to-back double ring. In a cyclic reaction, Hsp60 ring complexes bind one unfolded substrate protein per ring, followed by the binding of ATP and association with 2 heptameric rings of the co-chaperonin Hsp10. This leads to sequestration of the substrate protein in the inner cavity of Hsp60 where, for a certain period of time, it can fold undisturbed by other cell components. Synchronous hydrolysis of ATP in all Hsp60 subunits results in the dissociation of the chaperonin rings and the release of ADP and the folded substrate protein. The protein is 60 kDa heat shock protein, mitochondrial (Hspd1) of Rattus norvegicus (Rat).